Here is a 625-residue protein sequence, read N- to C-terminus: Vacuolar-sorting receptor 7 (625 aa).

The first 26 residues, 1-26 (MGLVNGRASLTFLLAALTIIAMVVEA), serve as a signal peptide directing secretion. The Lumenal portion of the chain corresponds to 27 to 564 (RFVVEKESIS…CIERYGSKTA (538 aa)). Residues 58–166 (DYGGFLIGSV…SFGDDLRQGF (109 aa)) form the PA domain. N292, N400, and N432 each carry an N-linked (GlcNAc...) asparagine glycan. 2 EGF-like domains span residues 414–464 (ETNE…TSCT) and 467–513 (GPAR…LTCE). 7 disulfide bridges follow: C418/C436, C425/C445, C447/C463, C471/C491, C478/C499, C501/C512, and C542/C555. The 43-residue stretch at 514-556 (DINECKERSVCQCSGCRCKNSWGGYKCSCSGDRLYINDQDTCI) folds into the EGF-like 3; calcium-binding domain. Residues 565–585 (WWLTFLILAIVAVAGLAGYIF) traverse the membrane as a helical segment. Residues 586-625 (YKYRFRSYMDSEIMTIMSQYMPLESQRAREVPSEAEPFTL) are Cytoplasmic-facing. A Tyrosine-based internalization motif motif is present at residues 605–608 (YMPL).

This sequence belongs to the VSR (BP-80) family. In terms of tissue distribution, expressed at low levels in seedlings, roots, young leaves, flowers and siliques.

It localises to the golgi apparatus membrane. Its function is as follows. Vacuolar-sorting receptor (VSR) involved in clathrin-coated vesicles sorting from Golgi apparatus to vacuoles. The sequence is that of Vacuolar-sorting receptor 7 (VSR7) from Arabidopsis thaliana (Mouse-ear cress).